A 186-amino-acid chain; its full sequence is MIIGVLAIQGDVEEHEEAIKKAGYEAKKVKRVEDLEGIDALIIPGGESTAIGKLMKKYGLLEKIKNSNLPILGTCAGMVLLSKGTGINQILLELMDITVKRNAYGRQVDSFEKEIEFKDLGKVYGVFIRAPVVDKILSDDVEVIARDGDKIVGVKQGKYMALSFHPELSEDGYKVYKYFVENCVKK.

46-48 (GES) contacts L-glutamine. The active-site Nucleophile is the Cys-75. Residues Arg-101 and 128-129 (IR) contribute to the L-glutamine site. Catalysis depends on charge relay system residues His-165 and Glu-167.

It belongs to the glutaminase PdxT/SNO family. In the presence of PdxS, forms a dodecamer of heterodimers. Only shows activity in the heterodimer.

It carries out the reaction aldehydo-D-ribose 5-phosphate + D-glyceraldehyde 3-phosphate + L-glutamine = pyridoxal 5'-phosphate + L-glutamate + phosphate + 3 H2O + H(+). It catalyses the reaction L-glutamine + H2O = L-glutamate + NH4(+). It participates in cofactor biosynthesis; pyridoxal 5'-phosphate biosynthesis. In terms of biological role, catalyzes the hydrolysis of glutamine to glutamate and ammonia as part of the biosynthesis of pyridoxal 5'-phosphate. The resulting ammonia molecule is channeled to the active site of PdxS. This chain is Pyridoxal 5'-phosphate synthase subunit PdxT, found in Methanocaldococcus jannaschii (strain ATCC 43067 / DSM 2661 / JAL-1 / JCM 10045 / NBRC 100440) (Methanococcus jannaschii).